We begin with the raw amino-acid sequence, 225 residues long: Ribonuclease 3 (225 aa).

Residues 5–127 (IDKLERKLGY…IIGAIYLDSD (123 aa)) form the RNase III domain. Position 40 (Glu40) interacts with Mg(2+). Asp44 is a catalytic residue. Residues Asp113 and Glu116 each coordinate Mg(2+). The active site involves Glu116. A DRBM domain is found at 154 to 224 (DPKTRLQEFL…AETALEQLTN (71 aa)). The segment at 204–225 (GTSRRKAEQAAAETALEQLTNG) is disordered. Residues 212–225 (QAAAETALEQLTNG) are compositionally biased toward low complexity.

The protein belongs to the ribonuclease III family. As to quaternary structure, homodimer. The cofactor is Mg(2+).

It localises to the cytoplasm. It catalyses the reaction Endonucleolytic cleavage to 5'-phosphomonoester.. Functionally, digests double-stranded RNA. Involved in the processing of primary rRNA transcript to yield the immediate precursors to the large and small rRNAs (23S and 16S). Processes some mRNAs, and tRNAs when they are encoded in the rRNA operon. Processes pre-crRNA and tracrRNA of type II CRISPR loci if present in the organism. The protein is Ribonuclease 3 of Vibrio parahaemolyticus serotype O3:K6 (strain RIMD 2210633).